The chain runs to 199 residues: LIM domain-containing protein WLIM2b (199 aa).

2 consecutive LIM zinc-binding domains span residues 8–68 (QKCK…LFKE) and 106–166 (EKCA…LFKE).

Interacts with F-actin. Expressed in roots, leaves, stems, flowers and siliques. Barely detected in pollen.

The protein resides in the cytoplasm. Its subcellular location is the cytoskeleton. Binds to actin filaments and promotes cross-linking into thick bundles. Has an actin-stabilizing activity. The actin regulatory activities are not regulated by pH and [Ca(2+)]. The chain is LIM domain-containing protein WLIM2b from Arabidopsis thaliana (Mouse-ear cress).